The primary structure comprises 225 residues: Cytidylate kinase (225 aa).

11 to 19 (GPAAAGKST) lines the ATP pocket.

This sequence belongs to the cytidylate kinase family. Type 1 subfamily.

It localises to the cytoplasm. It carries out the reaction CMP + ATP = CDP + ADP. The enzyme catalyses dCMP + ATP = dCDP + ADP. The sequence is that of Cytidylate kinase from Bacillus cereus (strain ATCC 10987 / NRS 248).